The chain runs to 430 residues: Arrestin-related trafficking adapter 10 (430 aa).

The interval 55 to 75 is disordered; that stretch reads AEADRHSSRLPQDPQTQYTKE. A compositionally biased stretch (polar residues) spans 63 to 72; the sequence is RLPQDPQTQY.

Belongs to the ART10 family.

The protein resides in the cytoplasm. Its function is as follows. May regulate endocytosis by recruiting RSP5 ubiquitin ligase activity to specific plasma membrane proteins in response to extracellular stimuli. In Eremothecium gossypii (strain ATCC 10895 / CBS 109.51 / FGSC 9923 / NRRL Y-1056) (Yeast), this protein is Arrestin-related trafficking adapter 10 (ART10).